The chain runs to 103 residues: Large ribosomal subunit protein bL21 (103 aa).

Belongs to the bacterial ribosomal protein bL21 family. In terms of assembly, part of the 50S ribosomal subunit. Contacts protein L20.

Its function is as follows. This protein binds to 23S rRNA in the presence of protein L20. The polypeptide is Large ribosomal subunit protein bL21 (Aliivibrio salmonicida (strain LFI1238) (Vibrio salmonicida (strain LFI1238))).